A 478-amino-acid chain; its full sequence is Lysosome membrane protein 2 (478 aa).

Topologically, residues 1-4 (MGRC) are cytoplasmic. Residues 5 to 27 (CFYTAGTLSLLLLVTSVTLLVAR) form a helical membrane-spanning segment. Topologically, residues 28-433 (VFQKAVDQSI…RLKSMINTTL (406 aa)) are lumenal. N-linked (GlcNAc...) asparagine glycans are attached at residues Asn-45, Asn-68, and Asn-105. Residues 155–191 (IIEAMLKAYQQKLFVTHTVDELLWGYKDEILSLIHVF) are important for interaction with GBA1. N-linked (GlcNAc...) asparagine glycosylation is found at Asn-206, Asn-224, Asn-249, and Asn-304. Cystine bridges form between Cys-274/Cys-329 and Cys-312/Cys-318. Residues Asn-325, Asn-412, and Asn-430 are each glycosylated (N-linked (GlcNAc...) asparagine). Residues 434–459 (IITNIPYIIMALGVFFGLVFTWLACK) form a helical membrane-spanning segment. At 460–478 (GQGSMDEGTADERAPLIRT) the chain is on the cytoplasmic side.

This sequence belongs to the CD36 family. In terms of assembly, interacts with GBA1. As to quaternary structure, (Microbial infection) Interacts with enterovirus 71 capsid proteins VP1 and VP2.

The protein resides in the lysosome membrane. In terms of biological role, acts as a lysosomal receptor for glucosylceramidase (GBA1) targeting. Functionally, (Microbial infection) Acts as a receptor for enterovirus 71. This Homo sapiens (Human) protein is Lysosome membrane protein 2 (SCARB2).